The chain runs to 412 residues: Inositol polyphosphate-5-phosphatase A (412 aa).

Cysteine 409 carries the S-farnesyl cysteine lipid modification. Residues 410-412 (VVQ) constitute a propeptide, removed in mature form.

It belongs to the inositol 1,4,5-trisphosphate 5-phosphatase type I family. Interacts with TASOR. Post-translationally, isoprenylation at Cys-409 is required for localization at the membrane. Predominantly expressed in heart, brain, and skeletal muscle. In brain; high level in Purkinje cells.

The protein resides in the cell membrane. It localises to the cell projection. The protein localises to the dendrite. The enzyme catalyses 1D-myo-inositol 1,4,5-trisphosphate + H2O = 1D-myo-inositol 1,4-bisphosphate + phosphate. The catalysed reaction is 1D-myo-inositol 1,3,4,5-tetrakisphosphate + H2O = 1D-myo-inositol 1,3,4-trisphosphate + phosphate. Functionally, phosphatase that specifically hydrolyzes the 5-phosphate of inositol 1,4,5-trisphosphate to inositol 1,4-bisphosphate, and inositol 1,3,4,5-tetrasphosphate to inositol 1,3,4-trisphosphate. Plays a crucial role in the survival of cerebellar Purkinje cells. In Homo sapiens (Human), this protein is Inositol polyphosphate-5-phosphatase A.